The following is a 245-amino-acid chain: PF03932 family protein CutC (245 aa).

Belongs to the CutC family.

It localises to the cytoplasm. This is PF03932 family protein CutC from Photobacterium profundum (strain SS9).